The chain runs to 200 residues: ATP-dependent Clp protease proteolytic subunit (200 aa).

The Nucleophile role is filled by Ser103. His128 is a catalytic residue.

It belongs to the peptidase S14 family. Fourteen ClpP subunits assemble into 2 heptameric rings which stack back to back to give a disk-like structure with a central cavity, resembling the structure of eukaryotic proteasomes.

The protein resides in the cytoplasm. It carries out the reaction Hydrolysis of proteins to small peptides in the presence of ATP and magnesium. alpha-casein is the usual test substrate. In the absence of ATP, only oligopeptides shorter than five residues are hydrolyzed (such as succinyl-Leu-Tyr-|-NHMec, and Leu-Tyr-Leu-|-Tyr-Trp, in which cleavage of the -Tyr-|-Leu- and -Tyr-|-Trp bonds also occurs).. Cleaves peptides in various proteins in a process that requires ATP hydrolysis. Has a chymotrypsin-like activity. Plays a major role in the degradation of misfolded proteins. This chain is ATP-dependent Clp protease proteolytic subunit, found in Vibrio parahaemolyticus serotype O3:K6 (strain RIMD 2210633).